Consider the following 282-residue polypeptide: Cyanocobalamin reductase / alkylcobalamin dealkylase (282 aa).

Residues Asp-104, 115–118 (ILAQ), 129–131 (YYQ), Cys-149, and Ile-160 each bind substrate. Positions 234-282 (LGLAQPSEKPSSPSPDLPFTTPAPKKPGNPSRARSWLSPRVSPPASPGP) are disordered. Residues Ser-245, Ser-247, Ser-275, and Ser-279 each carry the phosphoserine modification.

It belongs to the MMACHC family. As to quaternary structure, monomer in the absence of bound substrate. Homodimer; dimerization is triggered by binding to FMN or adenosylcobalamin. Interacts with LMBRD1 and ABCD4; the interaction ensures the transport of cobalamin from the lysosome to the cytoplasm. Forms a multiprotein complex with MMADHC, MTR and MTRR; the interaction with MTR could modulate MMACHC-dependent processing of cobalamin. Heterodimer with MMADHC; the interaction might play a role in the regulation of the balance between AdoCbl and MeCbl synthesis. FAD serves as cofactor. The cofactor is FMN. In terms of tissue distribution, widely expressed. Expressed at higher level in fetal liver. Also expressed in spleen, lymph node, thymus and bone marrow. Weakly or not expressed in peripheral blood leukocytes.

It is found in the cytoplasm. It localises to the cytosol. It catalyses the reaction 2 cob(II)alamin-[cyanocobalamin reductase] + 2 hydrogen cyanide + NADP(+) = 2 cyanocob(III)alamin + 2 apo-[cyanocobalamin reductase] + NADPH + H(+). The enzyme catalyses apo-[alkylcobalamin reductase] + an R-cob(III)alamin + glutathione = cob(I)alamin-[alkylcobalamin reductase] + an S-substituted glutathione + H(+). It carries out the reaction apo-[alkylcobalamin reductase] + methylcob(III)alamin + glutathione = S-methyl glutathione + cob(I)alamin-[alkylcobalamin reductase] + H(+). The catalysed reaction is apo-[alkylcobalamin reductase] + adenosylcob(III)alamin + glutathione = S-adenosylglutathione + cob(I)alamin-[alkylcobalamin reductase] + H(+). Cobalamin (vitamin B12) cytosolic chaperone that catalyzes the reductive decyanation of cyanocob(III)alamin (cyanocobalamin, CNCbl) to yield cob(II)alamin and cyanide, using FAD or FMN as cofactors and NADPH as cosubstrate. Cyanocobalamin constitutes the inactive form of vitamin B12 introduced from the diet, and is converted into the active cofactors methylcobalamin (MeCbl) involved in methionine biosynthesis, and 5'-deoxyadenosylcobalamin (AdoCbl) involved in the TCA cycle. Forms a complex with the lysosomal transporter ABCD4 and its chaperone LMBRD1, to transport cobalamin across the lysosomal membrane into the cytosol. The processing of cobalamin in the cytosol occurs in a multiprotein complex composed of at least MMACHC, MMADHC, MTRR (methionine synthase reductase) and MTR (methionine synthase) which may contribute to shuttle safely and efficiently cobalamin towards MTR in order to produce methionine. Also acts as a glutathione transferase by catalyzing the dealkylation of the alkylcob(III)alamins MeCbl and AdoCbl, using the thiolate of glutathione for nucleophilic displacement to generate cob(I)alamin and the corresponding glutathione thioether. The conversion of incoming MeCbl or AdoCbl into a common intermediate cob(I)alamin is necessary to meet the cellular needs for both cofactors. Cysteine and homocysteine cannot substitute for glutathione in this reaction. In Homo sapiens (Human), this protein is Cyanocobalamin reductase / alkylcobalamin dealkylase.